The following is a 475-amino-acid chain: Squamosa promoter-binding-like protein 12 (475 aa).

The tract at residues 49 to 73 is disordered; sequence NHGSTNSSGGTFTSSSELANGSSKS. Positions 51-73 are enriched in low complexity; the sequence is GSTNSSGGTFTSSSELANGSSKS. The SBP-type zinc-finger motif lies at 177–254; the sequence is SSYCQVEGCK…SDHNARRRKP (78 aa). 8 residues coordinate Zn(2+): Cys-180, Cys-185, Cys-202, His-205, Cys-221, Cys-224, His-228, and Cys-240. The Bipartite nuclear localization signal signature appears at 237–253; the sequence is KKSCRRRLSDHNARRRK. The disordered stretch occupies residues 437–475; it reads GGGGFWQDGDDPPPLDHASQAQAFMHPGNGSSSGYGHLH. Residues 465-475 are compositionally biased toward polar residues; it reads NGSSSGYGHLH.

In terms of tissue distribution, expressed in young panicles.

The protein resides in the nucleus. In terms of biological role, trans-acting factor that binds specifically to the consensus nucleotide sequence 5'-TNCGTACAA-3'. May be involved in panicle development. In Oryza sativa subsp. japonica (Rice), this protein is Squamosa promoter-binding-like protein 12 (SPL12).